A 95-amino-acid polypeptide reads, in one-letter code: Aspartyl/glutamyl-tRNA(Asn/Gln) amidotransferase subunit C (95 aa).

It belongs to the GatC family. Heterotrimer of A, B and C subunits.

The enzyme catalyses L-glutamyl-tRNA(Gln) + L-glutamine + ATP + H2O = L-glutaminyl-tRNA(Gln) + L-glutamate + ADP + phosphate + H(+). It carries out the reaction L-aspartyl-tRNA(Asn) + L-glutamine + ATP + H2O = L-asparaginyl-tRNA(Asn) + L-glutamate + ADP + phosphate + 2 H(+). Its function is as follows. Allows the formation of correctly charged Asn-tRNA(Asn) or Gln-tRNA(Gln) through the transamidation of misacylated Asp-tRNA(Asn) or Glu-tRNA(Gln) in organisms which lack either or both of asparaginyl-tRNA or glutaminyl-tRNA synthetases. The reaction takes place in the presence of glutamine and ATP through an activated phospho-Asp-tRNA(Asn) or phospho-Glu-tRNA(Gln). This chain is Aspartyl/glutamyl-tRNA(Asn/Gln) amidotransferase subunit C, found in Dehalococcoides mccartyi (strain ATCC BAA-2100 / JCM 16839 / KCTC 5957 / BAV1).